The chain runs to 111 residues: MNSCTLLVQILSCKSIRISENKSQIIKLKARLLKRKRLVIINLTIWNKKSSYTFKQLKKLDYVIIEGKLHRNNKIFTNKTKQVGKDLVFSTSRIFKYKSLLKNKDIDLFIK.

Residues 1–98 (MNSCTLLVQI…FSTSRIFKYK (98 aa)) form the SSB domain.

Its subcellular location is the plastid. The protein localises to the chloroplast. This chain is Putative single-stranded DNA-binding protein ycf41 (ycf41), found in Pyropia yezoensis (Susabi-nori).